The primary structure comprises 112 residues: uncharacterized protein (112 aa).

It localises to the plastid. The protein localises to the chloroplast. This is an uncharacterized protein from Chlamydomonas reinhardtii (Chlamydomonas smithii).